We begin with the raw amino-acid sequence, 139 residues long: Acidic phospholipase A2 5 (139 aa).

The N-terminal stretch at 1–16 is a signal peptide; that stretch reads MRTLWIVAVWLMGVEG. Intrachain disulfides connect cysteine 42–cysteine 131, cysteine 44–cysteine 60, cysteine 59–cysteine 111, cysteine 65–cysteine 139, cysteine 66–cysteine 104, cysteine 73–cysteine 97, and cysteine 91–cysteine 102. Tyrosine 43, glycine 45, and glycine 47 together coordinate Ca(2+). Histidine 63 is an active-site residue. Aspartate 64 is a binding site for Ca(2+). Aspartate 105 is an active-site residue.

This sequence belongs to the phospholipase A2 family. Group II subfamily. D49 sub-subfamily. The cofactor is Ca(2+). Expressed by the venom gland.

The protein resides in the secreted. The catalysed reaction is a 1,2-diacyl-sn-glycero-3-phosphocholine + H2O = a 1-acyl-sn-glycero-3-phosphocholine + a fatty acid + H(+). In terms of biological role, PLA2 catalyzes the calcium-dependent hydrolysis of the 2-acyl groups in 3-sn-phosphoglycerides. The polypeptide is Acidic phospholipase A2 5 (Echis pyramidum leakeyi (Leakey's carpet viper)).